The primary structure comprises 278 residues: MMTQAKVGLGLRREMLDEFCQSVPGAIDFFEVAPENWMTLGGKFGRQFRQLTEKHKFFCHGLSLSIGGPEPLDTRFVKQIKTFLDHHDIEIYSEHLSYCSGKGHLYDLMPIPFTDEAVRHVARRIEQVQDILERPFILENVSFYASPASEMSECEFVSAVLEEADCRLLLDVNNIYVNSINHQYDAEAFLRAMPSERIAYLHIAGHYDEAEDLKVDTHGSEVIDPVWRLLAICYQTHGVFPTLLERDFNIPATHELLKEINKIHGYQTKALQPSHRSA.

The protein belongs to the UPF0276 family.

This is UPF0276 protein Shew_2240 from Shewanella loihica (strain ATCC BAA-1088 / PV-4).